Here is a 970-residue protein sequence, read N- to C-terminus: Disks large 1 tumor suppressor protein (970 aa).

The region spanning Lys-4–Ser-64 is the L27 domain. Residues Thr-161–Asp-209 are disordered. Residues Gln-171–Gln-204 are compositionally biased toward low complexity. 2 consecutive PDZ domains span residues Asp-216 to Arg-303 and Glu-330 to Gln-421. Residues Thr-424 to Arg-477 are disordered. A compositionally biased stretch (low complexity) spans Ser-437 to His-462. The segment covering Met-466–Arg-477 has biased composition (polar residues). A Phosphoserine modification is found at Ser-496. In terms of domain architecture, PDZ 3 spans Thr-506–Pro-587. Residues Lys-620–Met-690 form the SH3 domain. At Thr-714 the chain carries Phosphothreonine. Residues Thr-780–Trp-955 enclose the Guanylate kinase-like domain.

The protein belongs to the MAGUK family. As to expression, during the cellular blastoderm stage, isoform B, isoform F, isoform H, isoform I and isoform L expression is localized to the cell borders. From stage 11 onwards, expression is found predominantly in the developing nervous system: axon bundles in the ventral cord and the brain. Stage 14 and 15 embryos exhibit expression in the developing body wall muscle. Expression in neuropil regions of the CNS and at NMJs persists through to larval development. Other isoforms show expression in embryonic epithelial cells. In larvae, expression is seen as a belt around salivary glands, imaginal disks and proventriculus. Expressed in adult reproductive tissues. In epithelia, coexpressed with scrib throughout development.

The protein localises to the cytoplasm. It is found in the cell membrane. It localises to the basolateral cell membrane. The protein resides in the cytoskeleton. Its subcellular location is the cell junction. The protein localises to the septate junction. During embryonic development, some isoforms are essential for proper neuronal differentiation and organization. Required for cell polarity; maintenance of apicobasal polarity. Plays a critical role at septate junctions in cellular growth control during larval development. The presence of a guanylate kinase domain suggests involvement in cellular adhesion as well as signal transduction to control cellular proliferation. This Drosophila melanogaster (Fruit fly) protein is Disks large 1 tumor suppressor protein (dlg1).